Here is a 631-residue protein sequence, read N- to C-terminus: RING finger protein 112 (631 aa).

The segment at 57-98 (CSICLERLRDPISLDCGHDFCIRCFSTHRLPGCEPPCCPECR) adopts an RING-type zinc-finger fold. The interval 131 to 631 (PVRAEPLLLV…GDREPLLQEE (501 aa)) is interaction with ZBTB16. The region spanning 166-397 (DTPVCLLAVL…YVSDVLSAAP (232 aa)) is the GB1/RHD3-type G domain. 318–319 (RD) contributes to the GTP binding site. 2 helical membrane passes run 547 to 567 (LAAV…GVVG) and 580 to 600 (GMVA…GGGV).

Belongs to the TRAFAC class dynamin-like GTPase superfamily. GB1/RHD3 GTPase family. GB1 subfamily. Self-associates. Interacts with SP1 in an oxidative stress-regulated manner. Interacts with SIGMAR1 in an oxidative stress-regulated manner. Interacts with ZBTB16 (via C2H2-type zinc finger domains 1 and 2). Post-translationally, auto-ubiquitinated. As to expression, predominantly expressed in brain. Decreased expression in glioma brain tumors as compared to normal brains (at protein level).

It localises to the membrane. The protein resides in the cytoplasm. The protein localises to the nucleus. It is found in the nuclear body. Its subcellular location is the nucleoplasm. It localises to the endosome. The protein resides in the cytoplasmic vesicle. The protein localises to the secretory vesicle. It is found in the synaptic vesicle. Its subcellular location is the postsynaptic density. It localises to the perikaryon. The protein resides in the cell projection. The protein localises to the neuron projection. The catalysed reaction is S-ubiquitinyl-[E2 ubiquitin-conjugating enzyme]-L-cysteine + [acceptor protein]-L-lysine = [E2 ubiquitin-conjugating enzyme]-L-cysteine + N(6)-ubiquitinyl-[acceptor protein]-L-lysine.. It participates in protein modification; protein ubiquitination. In terms of biological role, E3 ubiquitin-protein ligase that plays an important role in neuronal differentiation, including neurogenesis and gliogenesis, during brain development. During embryonic development initiates neuronal differentiation by inducing cell cycle arrest at the G0/G1 phase through up-regulation of cell-cycle regulatory proteins. Plays a role not only in the fetal period during the development of the nervous system, but also in the adult brain, where it is involved in the maintenance of neural functions and protection of the nervous tissue cells from oxidative stress-induced damage. Exhibits GTPase and E3 ubiquitin-protein ligase activities. Regulates dendritic spine density and synaptic neurotransmission; its ability to hydrolyze GTP is involved in the maintenance of dendritic spine density. The chain is RING finger protein 112 (RNF112) from Homo sapiens (Human).